A 334-amino-acid chain; its full sequence is GTP 3',8-cyclase (334 aa).

Positions 11–236 (GFNRKIDYLR…ESTESSQGPA (226 aa)) constitute a Radical SAM core domain. Arg20 contacts GTP. Positions 27 and 31 each coordinate [4Fe-4S] cluster. Tyr33 contacts S-adenosyl-L-methionine. Residue Cys34 coordinates [4Fe-4S] cluster. Arg69 lines the GTP pocket. Gly73 is a binding site for S-adenosyl-L-methionine. Thr100 serves as a coordination point for GTP. Ser124 contributes to the S-adenosyl-L-methionine binding site. A GTP-binding site is contributed by Lys161. Residue Met195 coordinates S-adenosyl-L-methionine. Positions 260 and 263 each coordinate [4Fe-4S] cluster. 265 to 267 (RVR) contributes to the GTP binding site. Cys277 serves as a coordination point for [4Fe-4S] cluster.

This sequence belongs to the radical SAM superfamily. MoaA family. As to quaternary structure, monomer and homodimer. [4Fe-4S] cluster is required as a cofactor.

It catalyses the reaction GTP + AH2 + S-adenosyl-L-methionine = (8S)-3',8-cyclo-7,8-dihydroguanosine 5'-triphosphate + 5'-deoxyadenosine + L-methionine + A + H(+). It functions in the pathway cofactor biosynthesis; molybdopterin biosynthesis. Catalyzes the cyclization of GTP to (8S)-3',8-cyclo-7,8-dihydroguanosine 5'-triphosphate. This chain is GTP 3',8-cyclase, found in Pseudomonas putida (strain GB-1).